Here is a 231-residue protein sequence, read N- to C-terminus: Large ribosomal subunit protein uL1 (231 aa).

This sequence belongs to the universal ribosomal protein uL1 family. Part of the 50S ribosomal subunit.

Functionally, binds directly to 23S rRNA. The L1 stalk is quite mobile in the ribosome, and is involved in E site tRNA release. In terms of biological role, protein L1 is also a translational repressor protein, it controls the translation of the L11 operon by binding to its mRNA. The polypeptide is Large ribosomal subunit protein uL1 (Mesomycoplasma hyopneumoniae (strain 232) (Mycoplasma hyopneumoniae)).